The chain runs to 458 residues: Periphilin-1 (458 aa).

Basic and acidic residues-rich tracts occupy residues 1 to 18 and 63 to 107; these read MWSE…ERAP and EGRS…DGFR. 2 disordered regions span residues 1 to 51 and 63 to 284; these read MWSE…SYNR and EGRS…LFED. Positions 103-109 match the Nuclear localization signal motif; the sequence is RDGFRRK. Lysine 109 participates in a covalent cross-link: Glycyl lysine isopeptide (Lys-Gly) (interchain with G-Cter in SUMO2). Phosphoserine is present on residues serine 110, serine 114, serine 133, and serine 140. The span at 116–142 shows a compositional bias: basic and acidic residues; the sequence is YARERSPYKRDNTFFRESPVGRKDSPH. Residues 143–154 are compositionally biased toward low complexity; that stretch reads SRSGSSVSSRSY. Lysine 160 participates in a covalent cross-link: Glycyl lysine isopeptide (Lys-Gly) (interchain with G-Cter in SUMO2). Phosphoserine occurs at positions 161 and 167. Lysine 180 participates in a covalent cross-link: Glycyl lysine isopeptide (Lys-Gly) (interchain with G-Cter in SUMO2). Over residues 181–194 the composition is skewed to basic and acidic residues; it reads RQNEGNPERDKERP. Serine 197 bears the Phosphoserine mark. Lysine 199 participates in a covalent cross-link: Glycyl lysine isopeptide (Lys-Gly) (interchain with G-Cter in SUMO2). Residues serine 201 and serine 205 each carry the phosphoserine modification. Positions 205 to 215 are enriched in low complexity; that stretch reads SPSSGSAVSSS. Basic and acidic residues predominate over residues 217–230; it reads VLDKPSRLTEKELA. Lysine 227 participates in a covalent cross-link: Glycyl lysine isopeptide (Lys-Gly) (interchain with G-Cter in SUMO2). Residues lysine 235 and lysine 240 each carry the N6-acetyllysine; alternate modification. Residues lysine 235 and lysine 240 each participate in a glycyl lysine isopeptide (Lys-Gly) (interchain with G-Cter in SUMO2); alternate cross-link. Residues 237–246 show a composition bias toward basic and acidic residues; it reads AAEKLEKSDE. Serine 325 is subject to Phosphoserine. Lysine 328 is covalently cross-linked (Glycyl lysine isopeptide (Lys-Gly) (interchain with G-Cter in SUMO2)). The segment at 345–406 is disordered; sequence GQTWQQVPPV…TQLRRTTGAP (62 aa). Residues 377–386 are compositionally biased toward pro residues; that stretch reads PQPPQAPQPL. Residues 388–398 show a composition bias toward basic residues; the sequence is PRKKRVRRTTQ. Residue lysine 453 forms a Glycyl lysine isopeptide (Lys-Gly) (interchain with G-Cter in SUMO2) linkage.

Homodimer. Component of the HUSH complex; at least composed of TASOR, PPHLN1 and MPHOSPH8. Interacts with SIN3A and HDAC1. May interact with PPL. Post-translationally, substrate of transglutaminase (in vitro). In terms of tissue distribution, ubiquitous.

It localises to the nucleus. The protein resides in the cytoplasm. The protein localises to the chromosome. In terms of biological role, component of the HUSH complex, a multiprotein complex that mediates epigenetic repression. The HUSH complex is recruited to genomic loci rich in H3K9me3 and is probably required to maintain transcriptional silencing by promoting recruitment of SETDB1, a histone methyltransferase that mediates further deposition of H3K9me3. In the HUSH complex, contributes to the maintenance of the complex at chromatin. Acts as a transcriptional corepressor and regulates the cell cycle, probably via the HUSH complex. The HUSH complex is also involved in the silencing of unintegrated retroviral DNA: some part of the retroviral DNA formed immediately after infection remains unintegrated in the host genome and is transcriptionally repressed. May be involved in epithelial differentiation by contributing to epidermal integrity and barrier formation. The protein is Periphilin-1 of Homo sapiens (Human).